The sequence spans 490 residues: Cytochrome P450 71A22 (490 aa).

A helical membrane pass occupies residues 2–22 (ESMIRIILLSLIIFITILFFI). Position 432 (Cys-432) interacts with heme.

It belongs to the cytochrome P450 family. Heme is required as a cofactor.

The protein localises to the membrane. The sequence is that of Cytochrome P450 71A22 (CYP71A22) from Arabidopsis thaliana (Mouse-ear cress).